An 856-amino-acid polypeptide reads, in one-letter code: DNA mismatch repair protein MutS (856 aa).

607–614 serves as a coordination point for ATP; that stretch reads GPNMSGKS.

The protein belongs to the DNA mismatch repair MutS family.

Its function is as follows. This protein is involved in the repair of mismatches in DNA. It is possible that it carries out the mismatch recognition step. This protein has a weak ATPase activity. This chain is DNA mismatch repair protein MutS, found in Lactobacillus delbrueckii subsp. bulgaricus (strain ATCC 11842 / DSM 20081 / BCRC 10696 / JCM 1002 / NBRC 13953 / NCIMB 11778 / NCTC 12712 / WDCM 00102 / Lb 14).